We begin with the raw amino-acid sequence, 198 residues long: RxLR effector protein CRE4 (198 aa).

A signal peptide spans 1–20 (MLRSFLLIVATVSLFGQCKP). The RxLR-dEER signature appears at 43 to 52 (RFVRTNDEER).

This sequence belongs to the RxLR effector family.

It is found in the secreted. The protein resides in the host cytoplasm. It localises to the host nucleus. Its subcellular location is the host nucleolus. Effector that is involved in host plant infection. Contributes to virulence during the early infection stage, by inhibiting plant defense responses induced by both PAMP-triggered immunity (PTI) and effector-triggered immunity (ETI). This Phytophthora infestans (strain T30-4) (Potato late blight agent) protein is RxLR effector protein CRE4 (CRE4).